A 23-amino-acid polypeptide reads, in one-letter code: MLYANPNTESSPVGFRKKYDNFI.

This sequence belongs to the aldehyde dehydrogenase family.

The catalysed reaction is an aldehyde + NAD(+) + H2O = a carboxylate + NADH + 2 H(+). The protein is Aldehyde dehydrogenase of Moraxella sp. (strain TAE123).